Consider the following 698-residue polypeptide: Dual trans-enoyl reductase/FAD-dependent monooxygenase tazHJ (698 aa).

Residues 54–57 (STAT), 78–81 (SPRH), tyrosine 96, and 279–280 (IA) each bind NADP(+). Positions 299, 312, and 372 each coordinate FAD. Residue arginine 455 is part of the active site. Positions 571 and 584 each coordinate FAD.

The protein in the N-terminal section; belongs to the zinc-containing alcohol dehydrogenase family. In the C-terminal section; belongs to the paxM FAD-dependent monooxygenase family.

It functions in the pathway secondary metabolite biosynthesis. Functionally, dual trans-enoyl reductase/FAD-dependent monooxygenase; part of the gene cluster that mediates the biosynthesis of azaterrilone A and other azaphilones, a class of fungal metabolites characterized by a highly oxygenated pyrano-quinone bicyclic core and exhibiting a broad range of bioactivities. The first step of the pathway begins with the non-reducing polyketide synthase tazA that assembles one acetyl-CoA starter unit, five malonyl-CoA units, and catalyzes a series of Claisen condensations, methylation, PT-mediated cyclization, and finally releases the first hexaketide precursor through the R-domain. The tazA product then undergoes reduction on its terminal ketone and the following pyran-ring formation by yet undetermined enzyme(s). Dehydration and enoyl reduction, possibly involving the trans-enoyl reductase tazE leads to the next intermediate. TazD is predicted as an acetyltransferase and might catalyze the acetylation steps leading to the synthesis of azaterrilone A. Azaterrilone A is not the final product of the taz pathway and both the highly reducing polyketide synthase tazB and the dual enzyme tazHJ catalyze late steps of the pathway, leading to the production of the 2 final stereoisomers that contain additional polyketide modification whose structures have still to be determined. The polypeptide is Dual trans-enoyl reductase/FAD-dependent monooxygenase tazHJ (Aspergillus terreus (strain NIH 2624 / FGSC A1156)).